A 274-amino-acid chain; its full sequence is Lectizyme (274 aa).

The N-terminal stretch at 1–16 (MKFFAVFALCVASVSA) is a signal peptide. Positions 32 to 268 (IINGHEAEKG…FDKWIEDSIE (237 aa)) constitute a Peptidase S1 domain. A disulfide bridge connects residues C57 and C73. Catalysis depends on charge relay system residues H72 and D119. 2 disulfides stabilise this stretch: C188/C204 and C215/C244. The Charge relay system role is filled by S219.

The protein belongs to the peptidase S1 family. In terms of tissue distribution, expressed in the midgut.

The protein localises to the secreted. Protein with lectin and protease activity involved in the establishment of trypanosome infections in tsetse flies. Binds D-glucosamine and agglutinates bloodstream-form trypanosomes and rabbit red blood cells. Capable of inducing transformation of bloodstream-form trypanosomes into procyclic (midgut) forms in vitro. In Glossina austeni (Savannah tsetse fly), this protein is Lectizyme (Gpl).